A 448-amino-acid polypeptide reads, in one-letter code: MREILHIQGGQCGNQIGAKFWEVVCDEHGIDPTGRYTGTSDLQLERVNVYYNEASCGRFVPRAVLMDLEPGTMDSVRTGPYGQIFRPDNFVFGQSGAGNNWAKGHYTEGAELIDSVLDVVRKEAENCDCLQGFQVCHSLGGGTGSGMGTLLISKIREEYPDRMMLTFSVFPSPKVSDTVVEPYNATLSVHQLVENADECMVLDNEALYDICFRTLKLTTPSFGDLNHLISATMSGVTCCLRFPGQLNSDLRKLAVNLIPFPRLHFFMVGFAPLTSRGSQQYRALTVPELTQQMWDAKNMMCAADPRHGRYLTASAMFRGKMSTKEVDEQMINVQNKNSSYFVEWIPNNVKSSVCDIPPRGLSMASTFIGNSTSIQEMFRRVSEQFTAMFRRKAFLHWYTGEGMDEMEFTEAESNMNDLVSEYQQYQDATADEDGEYEDELDGQEEEDM.

GTP-binding residues include Q11, E69, S138, G142, T143, G144, N204, and N226. Position 69 (E69) interacts with Mg(2+). Positions E421–M448 are disordered. Positions T429–M448 are enriched in acidic residues.

The protein belongs to the tubulin family. As to quaternary structure, dimer of alpha and beta chains. A typical microtubule is a hollow water-filled tube with an outer diameter of 25 nm and an inner diameter of 15 nM. Alpha-beta heterodimers associate head-to-tail to form protofilaments running lengthwise along the microtubule wall with the beta-tubulin subunit facing the microtubule plus end conferring a structural polarity. Microtubules usually have 13 protofilaments but different protofilament numbers can be found in some organisms and specialized cells. Requires Mg(2+) as cofactor.

The protein resides in the cytoplasm. It is found in the cytoskeleton. Functionally, tubulin is the major constituent of microtubules, a cylinder consisting of laterally associated linear protofilaments composed of alpha- and beta-tubulin heterodimers. Microtubules grow by the addition of GTP-tubulin dimers to the microtubule end, where a stabilizing cap forms. Below the cap, tubulin dimers are in GDP-bound state, owing to GTPase activity of alpha-tubulin. This is Tubulin beta-2 chain (TUBB2) from Eleusine indica (Goosegrass).